The chain runs to 144 residues: Large ribosomal subunit protein uL16 (144 aa).

Residues Met1–Gly19 are compositionally biased toward basic residues. The disordered stretch occupies residues Met1 to Glu26.

This sequence belongs to the universal ribosomal protein uL16 family. As to quaternary structure, part of the 50S ribosomal subunit.

Its function is as follows. Binds 23S rRNA and is also seen to make contacts with the A and possibly P site tRNAs. This Macrococcus caseolyticus (strain JCSC5402) (Macrococcoides caseolyticum) protein is Large ribosomal subunit protein uL16.